Here is a 172-residue protein sequence, read N- to C-terminus: Crossover junction endodeoxyribonuclease RuvC (172 aa).

Catalysis depends on residues Asp-7, Glu-68, and Asp-141. Residues Asp-7, Glu-68, and Asp-141 each coordinate Mg(2+).

This sequence belongs to the RuvC family. In terms of assembly, homodimer which binds Holliday junction (HJ) DNA. The HJ becomes 2-fold symmetrical on binding to RuvC with unstacked arms; it has a different conformation from HJ DNA in complex with RuvA. In the full resolvosome a probable DNA-RuvA(4)-RuvB(12)-RuvC(2) complex forms which resolves the HJ. Requires Mg(2+) as cofactor.

Its subcellular location is the cytoplasm. It carries out the reaction Endonucleolytic cleavage at a junction such as a reciprocal single-stranded crossover between two homologous DNA duplexes (Holliday junction).. Its function is as follows. The RuvA-RuvB-RuvC complex processes Holliday junction (HJ) DNA during genetic recombination and DNA repair. Endonuclease that resolves HJ intermediates. Cleaves cruciform DNA by making single-stranded nicks across the HJ at symmetrical positions within the homologous arms, yielding a 5'-phosphate and a 3'-hydroxyl group; requires a central core of homology in the junction. The consensus cleavage sequence is 5'-(A/T)TT(C/G)-3'. Cleavage occurs on the 3'-side of the TT dinucleotide at the point of strand exchange. HJ branch migration catalyzed by RuvA-RuvB allows RuvC to scan DNA until it finds its consensus sequence, where it cleaves and resolves the cruciform DNA. This is Crossover junction endodeoxyribonuclease RuvC from Frankia casuarinae (strain DSM 45818 / CECT 9043 / HFP020203 / CcI3).